The following is a 1054-amino-acid chain: Calcium-transporting ATPase 2, endoplasmic reticulum-type (1054 aa).

The Cytoplasmic segment spans residues 1-53 (MEEEKSFSAWSWSVEQCLKEYKTRLDKGLTSEDVQIRRQKYGFNELAKEKGKP). The chain crosses the membrane as a helical span at residues 54 to 74 (LWHLVLEQFDDTLVKILLGAA). The Lumenal portion of the chain corresponds to 75–98 (FISFVLAFLGEEHGSGSGFEAFVE). Residues 99 to 118 (PFVIVLILILNAVVGVWQES) form a helical membrane-spanning segment. Topologically, residues 119–262 (NAEKALEALK…ESETPLKKKL (144 aa)) are cytoplasmic. A helical transmembrane segment spans residues 263–282 (DEFGSRLTTAICIVCVLVWM). The Lumenal portion of the chain corresponds to 283 to 312 (INYKNFVSWDVVDGYKPVNIKFSFEKCTYY). A helical membrane pass occupies residues 313 to 330 (FKIAVALAVAAIPEGLPA). Positions 321, 322, 324, and 326 each coordinate Ca(2+). Residues 331–782 (VITTCLALGT…AEGRSIYNNM (452 aa)) are Cytoplasmic-facing. The active-site 4-aspartylphosphate intermediate is the Asp-368. Mg(2+)-binding residues include Asp-727 and Asp-731. A helical transmembrane segment spans residues 783-802 (KAFIRYMISSNVGEVISIFL). Ca(2+) is bound by residues Asn-793 and Glu-796. The Lumenal portion of the chain corresponds to 803–812 (TAALGIPECM). Residues 813–833 (IPVQLLWVNLVTDGPPATALG) form a helical membrane-spanning segment. Positions 821, 824, and 825 each coordinate Ca(2+). Residues 834–853 (FNPADIDIMKKPPRKSDDCL) are Cytoplasmic-facing. The chain crosses the membrane as a helical span at residues 854-876 (IDSWVLIRYLVIGSYVGVATVGI). Over 877–949 (FVLWYTQASF…YFTLGKVKPM (73 aa)) the chain is Lumenal. The chain crosses the membrane as a helical span at residues 950–969 (TLSLTVLVAIEMFNSLNALS). Position 960 (Glu-960) interacts with Ca(2+). Topologically, residues 970 to 982 (EDNSLLTMPPWRN) are cytoplasmic. The helical transmembrane segment at 983 to 1001 (PWLLVAMTVSFALHCVILY) threads the bilayer. Over 1002 to 1016 (VPFLANVFGIVPLSF) the chain is Lumenal. A helical transmembrane segment spans residues 1017 to 1037 (REWFVVILVSFPVILIDEALK). The Cytoplasmic segment spans residues 1038-1054 (FIGRCRRTRIKKKIKTM).

The protein belongs to the cation transport ATPase (P-type) (TC 3.A.3) family. Type IIA subfamily.

It localises to the membrane. It catalyses the reaction Ca(2+)(in) + ATP + H2O = Ca(2+)(out) + ADP + phosphate + H(+). Functionally, this magnesium-dependent enzyme catalyzes the hydrolysis of ATP coupled with the translocation of calcium from the cytosol to an endomembrane compartment. This Arabidopsis thaliana (Mouse-ear cress) protein is Calcium-transporting ATPase 2, endoplasmic reticulum-type (ECA2).